The chain runs to 439 residues: MPKPIVAIVGRPNVGKSTLFNRIVGARIAIVEDMPGVTRDRLYQDAEWQGREFTLVDTGGLDFAEDIITAQIRKQAELAIYEADIILFVVDAREGLTAIDEEVGRTLRRADKPVILVANKVEHFDKIPYYDFYQLGLGDPVPVSAAEGLNTGDLLDELVKNLPAQDEDPYPPDTIRIAVIGRPNVGKSSLVNTILGEERVIVSNIPGTTRDAIDSSFEKNGKNYVLVDTAGMRRRKKIDLPTERYSVVRALRAVDRCDVALMVFDATEGIAEQDKRIVGYAHEKGKAIILIINKWDLIEKDDKTMNRFEKKIREELAFLDYVPTLYISALTKQRVPKVLETVDFVAEEASKRVATADLNNLIREATQHNPPPADKHRRLKIFYATQGGVKPPTFILFVNEPEIMHFSYQRYLENKIRDTYGFKGTPIRFFLRKREGKDI.

2 consecutive EngA-type G domains span residues 4–166 and 175–350; these read PIVA…PAQD and IRIA…EEAS. Residues 10 to 17, 57 to 61, 119 to 122, 181 to 188, 228 to 232, and 293 to 296 contribute to the GTP site; these read GRPNVGKS, DTGGL, NKVE, DTAGM, and NKWD. In terms of domain architecture, KH-like spans 351–435; it reads KRVATADLNN…PIRFFLRKRE (85 aa).

Belongs to the TRAFAC class TrmE-Era-EngA-EngB-Septin-like GTPase superfamily. EngA (Der) GTPase family. In terms of assembly, associates with the 50S ribosomal subunit.

GTPase that plays an essential role in the late steps of ribosome biogenesis. The sequence is that of GTPase Der from Desulforamulus reducens (strain ATCC BAA-1160 / DSM 100696 / MI-1) (Desulfotomaculum reducens).